The primary structure comprises 496 residues: Glutamyl-tRNA(Gln) amidotransferase subunit A (496 aa).

Active-site charge relay system residues include lysine 75 and serine 150. Catalysis depends on serine 174, which acts as the Acyl-ester intermediate.

This sequence belongs to the amidase family. GatA subfamily. Heterotrimer of A, B and C subunits.

It catalyses the reaction L-glutamyl-tRNA(Gln) + L-glutamine + ATP + H2O = L-glutaminyl-tRNA(Gln) + L-glutamate + ADP + phosphate + H(+). In terms of biological role, allows the formation of correctly charged Gln-tRNA(Gln) through the transamidation of misacylated Glu-tRNA(Gln) in organisms which lack glutaminyl-tRNA synthetase. The reaction takes place in the presence of glutamine and ATP through an activated gamma-phospho-Glu-tRNA(Gln). This chain is Glutamyl-tRNA(Gln) amidotransferase subunit A, found in Burkholderia lata (strain ATCC 17760 / DSM 23089 / LMG 22485 / NCIMB 9086 / R18194 / 383).